The chain runs to 427 residues: Histidine--tRNA ligase (427 aa).

It belongs to the class-II aminoacyl-tRNA synthetase family. In terms of assembly, homodimer.

The protein localises to the cytoplasm. It carries out the reaction tRNA(His) + L-histidine + ATP = L-histidyl-tRNA(His) + AMP + diphosphate + H(+). The polypeptide is Histidine--tRNA ligase (Alteromonas mediterranea (strain DSM 17117 / CIP 110805 / LMG 28347 / Deep ecotype)).